Here is a 121-residue protein sequence, read N- to C-terminus: Large ribosomal subunit protein uL18 (121 aa).

The protein belongs to the universal ribosomal protein uL18 family. Part of the 50S ribosomal subunit; part of the 5S rRNA/L5/L18/L25 subcomplex. Contacts the 5S and 23S rRNAs.

Its function is as follows. This is one of the proteins that bind and probably mediate the attachment of the 5S RNA into the large ribosomal subunit, where it forms part of the central protuberance. The chain is Large ribosomal subunit protein uL18 from Buchnera aphidicola subsp. Baizongia pistaciae (strain Bp).